The chain runs to 395 residues: Putative carbonic anhydrase 1 (395 aa).

The N-terminal stretch at methionine 1 to serine 24 is a signal peptide. The region spanning isoleucine 42–arginine 365 is the Alpha-carbonic anhydrase domain. Zn(2+) is bound by residues histidine 139, histidine 141, and histidine 165.

This sequence belongs to the alpha-carbonic anhydrase family. Zn(2+) is required as a cofactor. In terms of tissue distribution, component of the acid-insoluble and acid-soluble organic matrix of calcified layers of the shell (at protein level).

Its subcellular location is the secreted. It carries out the reaction hydrogencarbonate + H(+) = CO2 + H2O. Reversible hydration of carbon dioxide. This is Putative carbonic anhydrase 1 from Lottia gigantea (Giant owl limpet).